We begin with the raw amino-acid sequence, 381 residues long: rRNA adenine N-6-methyltransferase (381 aa).

Basic and acidic residues predominate over residues 1–19 (MSSSDEQPRPRRRNQDRQH). The interval 1-42 (MSSSDEQPRPRRRNQDRQHPNQNRPVLGRTERDRNRRQFGQN) is disordered. Asn-42, Leu-44, Gly-69, Glu-90, Asp-115, and Ala-131 together coordinate S-adenosyl-L-methionine. Residues 282-381 (RLDQKNEPRG…PGRRGGPGQR (100 aa)) are disordered. Residues 301-358 (GGRDHGDRRTGGQDRGDRRTGGRDHRDRQASGHGDRRSSGRNRDDGRTGEREQGDQGG) show a composition bias toward basic and acidic residues. Positions 359–381 (RRGPSGGGRTGGRPGRRGGPGQR) are enriched in gly residues.

This sequence belongs to the class I-like SAM-binding methyltransferase superfamily. rRNA adenine N(6)-methyltransferase family.

It catalyses the reaction adenosine(2085) in 23S rRNA + 2 S-adenosyl-L-methionine = N(6)-dimethyladenosine(2085) in 23S rRNA + 2 S-adenosyl-L-homocysteine + 2 H(+). Its function is as follows. This protein produces a dimethylation of the adenine residue at position 2085 in 23S rRNA, resulting in reduced affinity between ribosomes and macrolide-lincosamide-streptogramin B antibiotics. In Saccharopolyspora erythraea (strain ATCC 11635 / DSM 40517 / JCM 4748 / NBRC 13426 / NCIMB 8594 / NRRL 2338), this protein is rRNA adenine N-6-methyltransferase (ermE).